The sequence spans 293 residues: Short-chain dehydrogenase/reductase PhomF (293 aa).

The NADP(+) site is built by Ile31 and Asn102. Catalysis depends on Ser175, which acts as the Proton donor. Residues Tyr190, Lys194, and Ser225 each coordinate NADP(+). The active-site Proton acceptor is the Tyr190. Lys194 serves as the catalytic Lowers pKa of active site Tyr.

It belongs to the short-chain dehydrogenases/reductases (SDR) family.

Its function is as follows. Short-chain dehydrogenase/reductase; part of the gene cluster that mediates the biosynthesis of the phomopsins, a group of hexapeptide mycotoxins which infects lupins and causes lupinosis disease in livestock. The role of phomF within the phomopsins biosynthesis pathway has still to be determined. The pathway starts with the processing of the precursor phomA by several endopeptidases including kexin proteases as well as the cluster-specific S41 family peptidase phomP1 and the oligopeptidase phomG to produce 10 identical copies of the hexapeptide Tyr-Val-Ile-Pro-Ile-Asp. After being excised from the precursor peptide, the core peptides are cyclized and modified post-translationally by enzymes encoded within the gene cluster. The timing and order of proteolysis of the phomA precursor and PTMs are still unknown. Two tyrosinase-like enzymes, phomQ1 and phomQ2, catalyze the chlorination and hydroxylation of Tyr, respectively. PhomYb, is proposed to be involved in the construction of the macrocyclic structure. The other 4 ustYa family proteins may be involved in PTMs that generate the unique structure of phomopsin A. PhomYa is required for the hydroxylation of C-beta of Tyr. PhomYc, phomYd, and phomYe are responsible for the biosynthesis of 2,3-dehydroisoleucine (dIle), 2,3-dehydroaspartic acid (dAsp), and 3,4-dehydroproline (dPro), respectively. While dIle formation by phomYc is indispensable for the installation of dAsp by phomYd, the order of the other PTMs have not been elucidated yet. Most of the biosynthetic enzymes likely have broad substrate specificity, and thus, there might be a metabolic grid from a precursor to phomopsin A. The enzyme(s) responsible for the biosynthesis of 3,4-dehydrovaline (dVal) have also not been identified yet. Finally, phomM acts as an S-adenosylmethionine-dependent alpha-N-methyltransferase that catalyzes two successive N-methylation reactions, converting N-desmethyl-phomopsin A to phomopsin A and phomopsin A further to an N,N-dimethylated congener called phomopsin E. This Diaporthe leptostromiformis (Lupinosis disease fungus) protein is Short-chain dehydrogenase/reductase PhomF.